Consider the following 131-residue polypeptide: Small ribosomal subunit protein uS8 (131 aa).

The protein belongs to the universal ribosomal protein uS8 family. As to quaternary structure, part of the 30S ribosomal subunit. Contacts proteins S5 and S12.

Its function is as follows. One of the primary rRNA binding proteins, it binds directly to 16S rRNA central domain where it helps coordinate assembly of the platform of the 30S subunit. The chain is Small ribosomal subunit protein uS8 from Paraburkholderia xenovorans (strain LB400).